Reading from the N-terminus, the 360-residue chain is Phospho-N-acetylmuramoyl-pentapeptide-transferase (360 aa).

10 helical membrane-spanning segments follow: residues tyrosine 21–glycine 41, threonine 73–leucine 93, alanine 94–valine 114, tryptophan 132–glycine 152, isoleucine 168–glycine 188, glycine 199–threonine 219, valine 239–tyrosine 259, valine 263–leucine 283, phenylalanine 288–valine 308, and valine 338–lysine 358.

This sequence belongs to the glycosyltransferase 4 family. MraY subfamily. Mg(2+) is required as a cofactor.

The protein localises to the cell inner membrane. It carries out the reaction UDP-N-acetyl-alpha-D-muramoyl-L-alanyl-gamma-D-glutamyl-meso-2,6-diaminopimeloyl-D-alanyl-D-alanine + di-trans,octa-cis-undecaprenyl phosphate = di-trans,octa-cis-undecaprenyl diphospho-N-acetyl-alpha-D-muramoyl-L-alanyl-D-glutamyl-meso-2,6-diaminopimeloyl-D-alanyl-D-alanine + UMP. It functions in the pathway cell wall biogenesis; peptidoglycan biosynthesis. In terms of biological role, catalyzes the initial step of the lipid cycle reactions in the biosynthesis of the cell wall peptidoglycan: transfers peptidoglycan precursor phospho-MurNAc-pentapeptide from UDP-MurNAc-pentapeptide onto the lipid carrier undecaprenyl phosphate, yielding undecaprenyl-pyrophosphoryl-MurNAc-pentapeptide, known as lipid I. The sequence is that of Phospho-N-acetylmuramoyl-pentapeptide-transferase from Haemophilus influenzae (strain 86-028NP).